Here is a 178-residue protein sequence, read N- to C-terminus: Flagellar transcriptional regulator FlhC (178 aa).

Residues C138, C141, C158, and C161 each contribute to the Zn(2+) site.

The protein belongs to the FlhC family. Heterohexamer composed of two FlhC and four FlhD subunits. Each FlhC binds a FlhD dimer, forming a heterotrimer, and a hexamer assembles by dimerization of two heterotrimers. Requires Zn(2+) as cofactor.

Its subcellular location is the cytoplasm. Functionally, functions in complex with FlhD as a master transcriptional regulator that regulates transcription of several flagellar and non-flagellar operons by binding to their promoter region. Activates expression of class 2 flagellar genes, including fliA, which is a flagellum-specific sigma factor that turns on the class 3 genes. Also regulates genes whose products function in a variety of physiological pathways. The sequence is that of Flagellar transcriptional regulator FlhC from Erwinia tasmaniensis (strain DSM 17950 / CFBP 7177 / CIP 109463 / NCPPB 4357 / Et1/99).